Here is a 199-residue protein sequence, read N- to C-terminus: Pneumococcal vaccine antigen A homolog (199 aa).

It is found in the cell surface. The polypeptide is Pneumococcal vaccine antigen A homolog (pvaA) (Streptococcus pyogenes serotype M3 (strain ATCC BAA-595 / MGAS315)).